Here is a 583-residue protein sequence, read N- to C-terminus: Aspartate--tRNA ligase (583 aa).

Residue glutamate 174 participates in L-aspartate binding. The aspartate stretch occupies residues 198 to 201 (QITK). An L-aspartate-binding site is contributed by arginine 220. ATP contacts are provided by residues 220 to 222 (RDE) and glutamine 229. Histidine 443 lines the L-aspartate pocket. Residue glutamate 477 participates in ATP binding. Residue arginine 484 coordinates L-aspartate. 529–532 (GLDR) serves as a coordination point for ATP.

It belongs to the class-II aminoacyl-tRNA synthetase family. Type 1 subfamily. As to quaternary structure, homodimer.

Its subcellular location is the cytoplasm. The catalysed reaction is tRNA(Asp) + L-aspartate + ATP = L-aspartyl-tRNA(Asp) + AMP + diphosphate. Catalyzes the attachment of L-aspartate to tRNA(Asp) in a two-step reaction: L-aspartate is first activated by ATP to form Asp-AMP and then transferred to the acceptor end of tRNA(Asp). The protein is Aspartate--tRNA ligase of Streptococcus thermophilus (strain ATCC BAA-250 / LMG 18311).